Consider the following 463-residue polypeptide: 3-isopropylmalate dehydratase large subunit (463 aa).

Positions 347, 407, and 410 each coordinate [4Fe-4S] cluster.

Belongs to the aconitase/IPM isomerase family. LeuC type 1 subfamily. In terms of assembly, heterodimer of LeuC and LeuD. It depends on [4Fe-4S] cluster as a cofactor.

It catalyses the reaction (2R,3S)-3-isopropylmalate = (2S)-2-isopropylmalate. It functions in the pathway amino-acid biosynthesis; L-leucine biosynthesis; L-leucine from 3-methyl-2-oxobutanoate: step 2/4. Its function is as follows. Catalyzes the isomerization between 2-isopropylmalate and 3-isopropylmalate, via the formation of 2-isopropylmaleate. This is 3-isopropylmalate dehydratase large subunit from Buchnera aphidicola subsp. Cinara cedri (strain Cc).